The sequence spans 624 residues: Phosphomethylpyrimidine synthase (624 aa).

The interval 48–70 (SDTHTSQGREKNPPLTVYDTSGP) is disordered. Residues N229, M258, Y287, H323, 343-345 (SRG), 384-387 (DGLR), and E423 each bind substrate. H427 lines the Zn(2+) pocket. Substrate is bound at residue Y450. Residue H491 participates in Zn(2+) binding. Residues C571, C574, and C579 each contribute to the [4Fe-4S] cluster site.

Belongs to the ThiC family. In terms of assembly, homodimer. The cofactor is [4Fe-4S] cluster.

The catalysed reaction is 5-amino-1-(5-phospho-beta-D-ribosyl)imidazole + S-adenosyl-L-methionine = 4-amino-2-methyl-5-(phosphooxymethyl)pyrimidine + CO + 5'-deoxyadenosine + formate + L-methionine + 3 H(+). Its pathway is cofactor biosynthesis; thiamine diphosphate biosynthesis. Its function is as follows. Catalyzes the synthesis of the hydroxymethylpyrimidine phosphate (HMP-P) moiety of thiamine from aminoimidazole ribotide (AIR) in a radical S-adenosyl-L-methionine (SAM)-dependent reaction. This is Phosphomethylpyrimidine synthase from Nitrosococcus oceani (strain ATCC 19707 / BCRC 17464 / JCM 30415 / NCIMB 11848 / C-107).